Reading from the N-terminus, the 72-residue chain is UPF0270 protein YheU (72 aa).

It belongs to the UPF0270 family.

The sequence is that of UPF0270 protein YheU from Shigella flexneri serotype 5b (strain 8401).